A 128-amino-acid polypeptide reads, in one-letter code: Large ribosomal subunit protein bL17 (128 aa).

The protein belongs to the bacterial ribosomal protein bL17 family. As to quaternary structure, part of the 50S ribosomal subunit. Contacts protein L32.

The chain is Large ribosomal subunit protein bL17 from Petrotoga mobilis (strain DSM 10674 / SJ95).